Reading from the N-terminus, the 180-residue chain is Secreted RxLR effector protein 19 (180 aa).

The first 19 residues, 1–19 (MKLLLRALATFVLLNGVDS), serve as a signal peptide directing secretion. Residues 25-171 (FQKCNVTGGP…IFALGALWGP (147 aa)) enclose the Jacalin-type lectin domain. Positions 52 to 77 (RALRLCGVDFVDGIGVTIWDLSVEEN) match the RxLR-dEER motif.

This sequence belongs to the RxLR effector family.

Its subcellular location is the secreted. It localises to the host cytoplasm. The protein resides in the host nucleus. Functionally, effector that partially suppresses the tobacco programmed cell death induced by cell death-inducing proteins. This Plasmopara viticola (Downy mildew of grapevine) protein is Secreted RxLR effector protein 19.